Here is a 502-residue protein sequence, read N- to C-terminus: Polyadenylate-binding protein, cytoplasmic and nuclear (502 aa).

RRM domains follow at residues Leu14–Glu90, Gly96–Pro176, Thr191–Arg275, and Lys299–Asn376.

The protein belongs to the polyadenylate-binding protein type-1 family.

The protein localises to the cytoplasm. It is found in the nucleus. In terms of biological role, binds the poly(A) tail of mRNA. Appears to be an important mediator of the multiple roles of the poly(A) tail in mRNA biogenesis, stability and translation. The chain is Polyadenylate-binding protein, cytoplasmic and nuclear (PAB1) from Encephalitozoon cuniculi (strain GB-M1) (Microsporidian parasite).